A 157-amino-acid chain; its full sequence is uncharacterized protein (157 aa).

The signal sequence occupies residues 1–30 (MLPEQGPQPSTMPLWCLLAACTSLPRQAAT).

Its subcellular location is the secreted. This is an uncharacterized protein from Homo sapiens (Human).